The sequence spans 105 residues: Thioredoxin (105 aa).

Residues 1-105 (MVNNVTDSSF…SLLDWINKSI (105 aa)) enclose the Thioredoxin domain. Cysteines 30 and 33 form a disulfide.

This sequence belongs to the thioredoxin family.

Its function is as follows. Component of the thioredoxin-thioredoxin reductase system. Participates in various redox reactions through the reversible oxidation of its active center dithiol to a disulfide and catalyzes dithiol-disulfide exchange reactions. The protein is Thioredoxin (trxA) of Rickettsia prowazekii (strain Madrid E).